The chain runs to 109 residues: Peptide chaperone MftB (109 aa).

This sequence belongs to the peptide chaperone MftB family. In terms of assembly, interacts with MftA and MftC.

In terms of biological role, peptide chaperone involved in the biosynthesis of the enzyme cofactor mycofactocin (MFT). Binds MftA and MftC with high affinity, and is essential for MftC activity on MftA, likely via the formation of a ternary complex. The chain is Peptide chaperone MftB from Mycobacterium ulcerans (strain Agy99).